Reading from the N-terminus, the 186-residue chain is Ribosome-recycling factor (186 aa).

The protein belongs to the RRF family.

It localises to the cytoplasm. In terms of biological role, responsible for the release of ribosomes from messenger RNA at the termination of protein biosynthesis. May increase the efficiency of translation by recycling ribosomes from one round of translation to another. This is Ribosome-recycling factor from Pelodictyon phaeoclathratiforme (strain DSM 5477 / BU-1).